Consider the following 808-residue polypeptide: Putative minor structural protein VP5 (808 aa).

It is found in the virion. This Rice ragged stunt virus (isolate Thailand) (RRSV) protein is Putative minor structural protein VP5.